We begin with the raw amino-acid sequence, 330 residues long: Polyprenal reductase (330 aa).

The Cytoplasmic portion of the chain corresponds to 1-16 (MAGWAGAELSVLNPLR). A helical transmembrane segment spans residues 17–37 (ALWLLLAAAFLLALLLQLAPA). Residues 38-89 (RLLPSCALFQDLIRYGKTKQSGSRRPAVCRAFDVPKRYFSHFYVVSVLWNGS) are Lumenal-facing. A helical transmembrane segment spans residues 90–110 (LLWFLSQSLFLGAPFPSWLWA). Residues 111 to 136 (LLRTLGVTQFQALGMESKASRIQGKK) are Cytoplasmic-facing. The helical transmembrane segment at 137-157 (LALSTFLVLVFLWVHSLRRLF) threads the bilayer. The Lumenal segment spans residues 158–169 (ECFYVSVFSNTA). The helical transmembrane segment at 170–190 (IHVVQYCFGLVYYVLVGLTVL) threads the bilayer. Residues 191–206 (SQVPMNDKNVYALGKN) are Cytoplasmic-facing. Residues 207–227 (LLLQARWFHILGMMMFFWSSA) traverse the membrane as a helical segment. The Lumenal segment spans residues 228–277 (HQYKCHVILSNLRRNKKGVVIHCQHRIPFGDWFEYVSSANYLAELMIYIS). A helical transmembrane segment spans residues 278–298 (MAVTFGLHNVTWWLVVTYVFF). Topologically, residues 299–330 (SQALSAFFNHRFYKSTFVSYPKHRKAFLPFLF) are cytoplasmic.

The protein belongs to the steroid 5-alpha reductase family. Polyprenal reductase subfamily. As to expression, expressed in the 2 tissues tested i.e. testis and liver.

The protein resides in the endoplasmic reticulum membrane. It catalyses the reaction a di-trans,poly-cis-dolichal + NADP(+) = a di-trans,poly-cis-polyprenal + NADPH + H(+). The enzyme catalyses a 3-oxo-5alpha-steroid + NADP(+) = a 3-oxo-Delta(4)-steroid + NADPH + H(+). It carries out the reaction androst-4-ene-3,17-dione + NADPH + H(+) = 5alpha-androstan-3,17-dione + NADP(+). The catalysed reaction is 17beta-hydroxy-5alpha-androstan-3-one + NADP(+) = testosterone + NADPH + H(+). Its pathway is protein modification; protein glycosylation. Functionally, plays a key role in early steps of protein N-linked glycosylation by being involved in the conversion of polyprenol into dolichol. Acts as a polyprenal reductase that mediates the reduction of polyprenal into dolichal in a NADP-dependent mechanism. Dolichols are required for the synthesis of dolichol-linked monosaccharides and the oligosaccharide precursor used for N-glycosylation. Also able to convert testosterone (T) into 5-alpha-dihydrotestosterone (DHT). The protein is Polyprenal reductase of Rattus norvegicus (Rat).